The following is a 387-amino-acid chain: Patatin-08 (387 aa).

The signal sequence occupies residues 1–23; sequence MATTKSFLILIVMILATTSSTFA. The PNPLA domain occupies 32–230; that stretch reads LSIDGGGIKG…TVADPALLSI (199 aa). The GXGXXG motif lies at 36 to 41; the sequence is GGGIKG. Positions 75–79 match the GXSXG motif; the sequence is GTSTG. Ser-77 serves as the catalytic Nucleophile. Residue Asn-115 is glycosylated (N-linked (GlcNAc...) asparagine). The active-site Proton acceptor is Asp-216. Residues 216-218 carry the DGA/G motif; it reads DGA. A coiled-coil region spans residues 361–385; that stretch reads ETYEEALKRFAKLLSDRKKLRANKA.

It belongs to the patatin family. As to expression, tuber.

The protein resides in the vacuole. Probable lipolytic acyl hydrolase (LAH), an activity which is thought to be involved in the response of tubers to pathogens. This is Patatin-08 from Solanum tuberosum (Potato).